The primary structure comprises 265 residues: NAD kinase 2 (265 aa).

Catalysis depends on Asp51, which acts as the Proton acceptor. NAD(+) contacts are provided by residues 51 to 52 (DG), 122 to 123 (NE), Arg149, Asp151, 162 to 167 (TAYNKS), and Ala186.

The protein belongs to the NAD kinase family. The cofactor is a divalent metal cation.

The protein resides in the cytoplasm. The enzyme catalyses NAD(+) + ATP = ADP + NADP(+) + H(+). In terms of biological role, involved in the regulation of the intracellular balance of NAD and NADP, and is a key enzyme in the biosynthesis of NADP. Catalyzes specifically the phosphorylation on 2'-hydroxyl of the adenosine moiety of NAD to yield NADP. The polypeptide is NAD kinase 2 (Bacillus licheniformis (strain ATCC 14580 / DSM 13 / JCM 2505 / CCUG 7422 / NBRC 12200 / NCIMB 9375 / NCTC 10341 / NRRL NRS-1264 / Gibson 46)).